A 99-amino-acid polypeptide reads, in one-letter code: Plastocyanin (99 aa).

The Plastocyanin-like domain maps to 1–99 (IEIKLGGDDG…AGMVGKVTVQ (99 aa)). Cu cation-binding residues include histidine 37, cysteine 84, histidine 87, and methionine 92.

The protein belongs to the plastocyanin family. Cu(2+) is required as a cofactor.

The protein resides in the plastid. It is found in the chloroplast thylakoid membrane. Its function is as follows. Participates in electron transfer between P700 and the cytochrome b6-f complex in photosystem I. The chain is Plastocyanin (PETE) from Rumex obtusifolius (Bitter dock).